A 759-amino-acid polypeptide reads, in one-letter code: Arylphorin subunit C223 (759 aa).

Residues 1–15 form the signal peptide; the sequence is MKIAIVLLAIVGLAA.

This sequence belongs to the hemocyanin family. In terms of assembly, heterohexamer. Fat body.

It localises to the secreted. Its subcellular location is the extracellular space. Arylphorin is a larval storage protein (LSP) which may serve as a storage protein used primarily as a source of aromatic amino acids for protein synthesis during metamorphosis. It is a constituent of the sclerotizing system of the cuticle, and serves as a carrier for ecdysteroid hormone. This Calliphora vicina (Blue blowfly) protein is Arylphorin subunit C223.